We begin with the raw amino-acid sequence, 416 residues long: Glutamyl-tRNA reductase (416 aa).

Substrate-binding positions include 46–49 (TCNR), S97, 102–104 (DHE), and Q108. The Nucleophile role is filled by C47. An NADP(+)-binding site is contributed by 178–183 (GAGMAA).

The protein belongs to the glutamyl-tRNA reductase family. As to quaternary structure, homodimer.

The enzyme catalyses (S)-4-amino-5-oxopentanoate + tRNA(Glu) + NADP(+) = L-glutamyl-tRNA(Glu) + NADPH + H(+). The protein operates within porphyrin-containing compound metabolism; protoporphyrin-IX biosynthesis; 5-aminolevulinate from L-glutamyl-tRNA(Glu): step 1/2. Functionally, catalyzes the NADPH-dependent reduction of glutamyl-tRNA(Glu) to glutamate 1-semialdehyde (GSA). The chain is Glutamyl-tRNA reductase from Aeropyrum pernix (strain ATCC 700893 / DSM 11879 / JCM 9820 / NBRC 100138 / K1).